The following is a 104-amino-acid chain: Glutaredoxin-C15 (104 aa).

In terms of domain architecture, Glutaredoxin spans 1 to 103 (MERVAKLSTE…PMLKAAGAIW (103 aa)). The cysteines at positions 21 and 24 are disulfide-linked.

This sequence belongs to the glutaredoxin family. CC-type subfamily.

It is found in the cytoplasm. Has a glutathione-disulfide oxidoreductase activity in the presence of NADPH and glutathione reductase. Reduces low molecular weight disulfides and proteins. In Oryza sativa subsp. japonica (Rice), this protein is Glutaredoxin-C15 (GRXC15).